Here is a 217-residue protein sequence, read N- to C-terminus: Claudin-9 (217 aa).

Residues 1 to 7 are Cytoplasmic-facing; it reads MASTGLE. Residues 8–28 traverse the membrane as a helical segment; that stretch reads LLGMTLAVLGWLGTLVSCALP. Topologically, residues 29-81 are extracellular; sequence LWKVTAFIGNSIVVAQVVWEGLWMSCVVQSTGQMQCKVYDSLLALPQDLQAAR. Residues 82-102 traverse the membrane as a helical segment; it reads ALCVIALLLALLGLLVAITGA. The Cytoplasmic segment spans residues 103 to 116; the sequence is QCTTCVEDEGAKAR. The chain crosses the membrane as a helical span at residues 117 to 137; sequence IVLTAGVILLLAGILVLIPVC. The Extracellular segment spans residues 138 to 159; the sequence is WTAHAIIQDFYNPLVAEALKRE. The helical transmembrane segment at 160-180 threads the bilayer; sequence LGASLYLGWAAAALLMLGGGL. Residues 181–217 are Cytoplasmic-facing; the sequence is LCCTCPPPQVERPRGPRLGYSIPSRSGASGLDKRDYV. The interval 194–217 is disordered; it reads RGPRLGYSIPSRSGASGLDKRDYV.

Belongs to the claudin family. Interacts with CLDN1, CD81 and OCLN. Expressed in the liver, in peripheral blood mononuclear cells and hepatocarcinoma cell lines.

Its subcellular location is the cell junction. It is found in the tight junction. It localises to the cell membrane. Functionally, plays a major role in tight junction-specific obliteration of the intercellular space, through calcium-independent cell-adhesion activity. (Microbial infection) Acts as a receptor for hepatitis C virus (HCV) entry into hepatic cells. In Homo sapiens (Human), this protein is Claudin-9 (CLDN9).